Consider the following 151-residue polypeptide: Transcription elongation factor Spt5 (151 aa).

Residues 98–128 form the KOW domain; sequence PGQVVEIVAGAFKGMKARVIDVNQSKGQVTV.

This sequence belongs to the archaeal Spt5 family. In terms of assembly, heterodimer composed of Spt4 and Spt5. Interacts with RNA polymerase (RNAP).

In terms of biological role, stimulates transcription elongation. The sequence is that of Transcription elongation factor Spt5 from Aeropyrum pernix (strain ATCC 700893 / DSM 11879 / JCM 9820 / NBRC 100138 / K1).